The following is a 205-amino-acid chain: Small ribosomal subunit protein uS4 (205 aa).

The disordered stretch occupies residues 17–46 (ENIWGRPKSPVNKREYGPGQHGQRRKGKLS). One can recognise an S4 RNA-binding domain in the interval 94–157 (SRLDAVVYRA…KQLVIVLESV (64 aa)).

Belongs to the universal ribosomal protein uS4 family. As to quaternary structure, part of the 30S ribosomal subunit. Contacts protein S5. The interaction surface between S4 and S5 is involved in control of translational fidelity.

In terms of biological role, one of the primary rRNA binding proteins, it binds directly to 16S rRNA where it nucleates assembly of the body of the 30S subunit. Its function is as follows. With S5 and S12 plays an important role in translational accuracy. This is Small ribosomal subunit protein uS4 from Mesorhizobium japonicum (strain LMG 29417 / CECT 9101 / MAFF 303099) (Mesorhizobium loti (strain MAFF 303099)).